Here is a 261-residue protein sequence, read N- to C-terminus: Triosephosphate isomerase (261 aa).

A substrate-binding site is contributed by 10–12 (NWK). The Electrophile role is filled by H100. E172 (proton acceptor) is an active-site residue. Residues G178, S218, and 239 to 240 (GG) contribute to the substrate site.

The protein belongs to the triosephosphate isomerase family. As to quaternary structure, homodimer.

Its subcellular location is the cytoplasm. The enzyme catalyses D-glyceraldehyde 3-phosphate = dihydroxyacetone phosphate. It participates in carbohydrate biosynthesis; gluconeogenesis. Its pathway is carbohydrate degradation; glycolysis; D-glyceraldehyde 3-phosphate from glycerone phosphate: step 1/1. Functionally, involved in the gluconeogenesis. Catalyzes stereospecifically the conversion of dihydroxyacetone phosphate (DHAP) to D-glyceraldehyde-3-phosphate (G3P). This chain is Triosephosphate isomerase, found in Mycobacterium bovis (strain BCG / Pasteur 1173P2).